The sequence spans 77 residues: uncharacterized protein (77 aa).

Residues 36–52 (FYQLILKVLSALLLLSV) traverse the membrane as a helical segment.

Its subcellular location is the membrane. This is an uncharacterized protein from Saccharomyces cerevisiae (strain ATCC 204508 / S288c) (Baker's yeast).